The primary structure comprises 1274 residues: Vacuolar protein sorting-associated protein 8 (1274 aa).

N-acetylmethionine is present on Met-1. 3 WD repeats span residues 75–119 (THVY…QTIL), 131–170 (SIRSPVKSIVICSDGTHVAASYETGNICIWNLNVGYRVKP), and 193–233 (HVNK…FWQL). CHCR repeat units follow at residues 507–665 (LQQS…YPQN) and 915–1092 (FDLL…KYPS). Residues 1198-1266 (CEICGKKIWG…PDEYSCLICQ (69 aa)) form an RING-type; atypical zinc finger.

The protein belongs to the VPS8 family.

It is found in the golgi apparatus. Its subcellular location is the golgi stack. Required for localization and recycling of the CPY sorting receptor (VPS10) to the late-Golgi compartment. Involved in the retention of proteins to the late-Golgi. Plays an integral role in the complex vacuolar protein sorting process. This Saccharomyces cerevisiae (strain ATCC 204508 / S288c) (Baker's yeast) protein is Vacuolar protein sorting-associated protein 8 (VPS8).